The chain runs to 226 residues: Phosphoglycolate phosphatase (226 aa).

The active-site Nucleophile is Asp-10. 3 residues coordinate Mg(2+): Asp-10, Asp-12, and Asp-175.

This sequence belongs to the HAD-like hydrolase superfamily. CbbY/CbbZ/Gph/YieH family. Mg(2+) is required as a cofactor.

The catalysed reaction is 2-phosphoglycolate + H2O = glycolate + phosphate. It functions in the pathway organic acid metabolism; glycolate biosynthesis; glycolate from 2-phosphoglycolate: step 1/1. Specifically catalyzes the dephosphorylation of 2-phosphoglycolate. Is involved in the dissimilation of the intracellular 2-phosphoglycolate formed during the DNA repair of 3'-phosphoglycolate ends, a major class of DNA lesions induced by oxidative stress. This Vibrio cholerae serotype O1 (strain ATCC 39315 / El Tor Inaba N16961) protein is Phosphoglycolate phosphatase.